Here is a 239-residue protein sequence, read N- to C-terminus: 1-(5-phosphoribosyl)-5-[(5-phosphoribosylamino)methylideneamino] imidazole-4-carboxamide isomerase (239 aa).

Residue D8 is the Proton acceptor of the active site. D130 functions as the Proton donor in the catalytic mechanism.

It belongs to the HisA/HisF family.

The protein resides in the cytoplasm. The enzyme catalyses 1-(5-phospho-beta-D-ribosyl)-5-[(5-phospho-beta-D-ribosylamino)methylideneamino]imidazole-4-carboxamide = 5-[(5-phospho-1-deoxy-D-ribulos-1-ylimino)methylamino]-1-(5-phospho-beta-D-ribosyl)imidazole-4-carboxamide. Its pathway is amino-acid biosynthesis; L-histidine biosynthesis; L-histidine from 5-phospho-alpha-D-ribose 1-diphosphate: step 4/9. The sequence is that of 1-(5-phosphoribosyl)-5-[(5-phosphoribosylamino)methylideneamino] imidazole-4-carboxamide isomerase from Streptococcus thermophilus (strain ATCC BAA-491 / LMD-9).